The chain runs to 814 residues: Dimethyl sulfoxide reductase DmsA (814 aa).

Residues 1–45 constitute a signal peptide (tat-type signal); the sequence is MKTKIPDAVLAAEVSRRGLVKTTAIGGLAMASSALTLPFSRIAHA. Positions 56–118 constitute a 4Fe-4S Mo/W bis-MGD-type domain; that stretch reads EKVIWSACTV…SMRRRVYNPD (63 aa). Residues cysteine 63, cysteine 67, cysteine 71, and cysteine 104 each coordinate [4Fe-4S] cluster. Residues 172–176, serine 205, 244–245, 270–271, 291–293, 386–387, arginine 390, asparagine 488, 512–513, histidine 701, 707–709, asparagine 788, and 804–805 each bind Mo-bis(molybdopterin guanine dinucleotide); these read LGGTM, ET, ID, GTD, WG, HST, and SH.

The protein belongs to the prokaryotic molybdopterin-containing oxidoreductase family. As to quaternary structure, heterotrimeric enzyme composed of a catalytic heterodimer (DmsAB) and a membrane anchor protein (DmsC). The cofactor is [4Fe-4S] cluster. Requires Mo-bis(molybdopterin guanine dinucleotide) as cofactor. Post-translationally, exported by the Tat system. The position of the signal peptide cleavage has been experimentally proven. Can also be exported by the Sec system.

It localises to the cell membrane. The catalysed reaction is dimethyl sulfide + a menaquinone + H2O = dimethyl sulfoxide + a menaquinol. Its activity is regulated as follows. Inhibited by dithionite, sodium hydrogensulfite and tungstate. Catalyzes the reduction of dimethyl sulfoxide (DMSO) to dimethyl sulfide (DMS). DMSO reductase serves as the terminal reductase under anaerobic conditions, with DMSO being the terminal electron acceptor. Terminal reductase during anaerobic growth on various sulfoxides and N-oxide compounds. Allows E.coli to grow anaerobically on DMSO as respiratory oxidant. The protein is Dimethyl sulfoxide reductase DmsA (dmsA) of Escherichia coli (strain K12).